Here is a 122-residue protein sequence, read N- to C-terminus: Large ribosomal subunit protein uL14 (122 aa).

It belongs to the universal ribosomal protein uL14 family. Part of the 50S ribosomal subunit. Forms a cluster with proteins L3 and L19. In the 70S ribosome, L14 and L19 interact and together make contacts with the 16S rRNA in bridges B5 and B8.

Its function is as follows. Binds to 23S rRNA. Forms part of two intersubunit bridges in the 70S ribosome. This Xylella fastidiosa (strain M23) protein is Large ribosomal subunit protein uL14.